A 210-amino-acid chain; its full sequence is Large ribosomal subunit protein uL3 (210 aa).

Residues 119 to 143 (GYQGNIKKDGQSRGPMAHGSRYHRR) are disordered.

It belongs to the universal ribosomal protein uL3 family. Part of the 50S ribosomal subunit. Forms a cluster with proteins L14 and L19.

In terms of biological role, one of the primary rRNA binding proteins, it binds directly near the 3'-end of the 23S rRNA, where it nucleates assembly of the 50S subunit. The sequence is that of Large ribosomal subunit protein uL3 from Lacticaseibacillus casei (strain BL23) (Lactobacillus casei).